Here is a 292-residue protein sequence, read N- to C-terminus: MFTGSIVALVTPMDEKGNVSRSCLKKLIDYHVANGTSAIVSVGTTGESATLSHDEHGDVVMMTLELADGRIPVIAGTGANATAEAISLTQRFNDSGIVGCLTVTPYYNRPTQEGLFQHFKAIAEHTDLPQILYNVPSRTGCDMLPETVGRLAEIKNIIAIKEATGNLTRVHQIKELVSDDFILLSGDDASALDFMQLGGHGVISVTANVAARDMADMCKLAAEGQFAEARAINQRLMPLHNKLFVEPNPIPVKWACKALGLVATDTLRLPMTPITDHGRDIVKAALQHAGLL.

T45 is a binding site for pyruvate. Y133 (proton donor/acceptor) is an active-site residue. The active-site Schiff-base intermediate with substrate is K161. Residue I203 participates in pyruvate binding.

The protein belongs to the DapA family. As to quaternary structure, homotetramer; dimer of dimers.

It is found in the cytoplasm. The catalysed reaction is L-aspartate 4-semialdehyde + pyruvate = (2S,4S)-4-hydroxy-2,3,4,5-tetrahydrodipicolinate + H2O + H(+). It participates in amino-acid biosynthesis; L-lysine biosynthesis via DAP pathway; (S)-tetrahydrodipicolinate from L-aspartate: step 3/4. Functionally, catalyzes the condensation of (S)-aspartate-beta-semialdehyde [(S)-ASA] and pyruvate to 4-hydroxy-tetrahydrodipicolinate (HTPA). The polypeptide is 4-hydroxy-tetrahydrodipicolinate synthase (Salmonella typhi).